A 310-amino-acid chain; its full sequence is Homoserine kinase (310 aa).

95 to 105 contacts ATP; the sequence is PQSRGLGSSAA.

This sequence belongs to the GHMP kinase family. Homoserine kinase subfamily.

Its subcellular location is the cytoplasm. It catalyses the reaction L-homoserine + ATP = O-phospho-L-homoserine + ADP + H(+). Its pathway is amino-acid biosynthesis; L-threonine biosynthesis; L-threonine from L-aspartate: step 4/5. In terms of biological role, catalyzes the ATP-dependent phosphorylation of L-homoserine to L-homoserine phosphate. The chain is Homoserine kinase from Corynebacterium kroppenstedtii (strain DSM 44385 / JCM 11950 / CIP 105744 / CCUG 35717).